The primary structure comprises 581 residues: FAD-dependent monooxygenase DEP4 (581 aa).

43-46 (VWSK) is an FAD binding site. 54 to 56 (FAQ) is a binding site for NADP(+). Val-108 is an FAD binding site. Residues 183–202 (VGRSKSSYDAVYHLLCEGKR), 219–220 (AP), and 351–352 (DI) each bind NADP(+). Met-470 lines the FAD pocket.

It belongs to the FAD-binding monooxygenase family. FAD is required as a cofactor.

It participates in polyketide biosynthesis. In terms of biological role, FAD-dependent monooxygenase; part of the gene cluster that mediates the biosynthesis of depudecin, a highly oxidized eleven-carbon linear polyketide that acts as a histone deacetylase (HDAC) inhibitor and makes a small contribution to pathogenesis. The reducing polyketide synthase DEP5 is the central enzyme in depudecin biosynthesis by yielding the backbone polyketide chain. The monooxygenases DEP2 and DEP4, as well as the uncharacterized protein DEP1, then act as tailoring enzymes to modify the intermediate polyketide chain into depudecin. This Alternaria brassicicola (Dark leaf spot agent) protein is FAD-dependent monooxygenase DEP4.